The sequence spans 407 residues: Ornithine cyclodeaminase (407 aa).

NAD(+)-binding residues include Asn-233, Ala-234, Asp-312, Thr-344, Met-345, Leu-346, His-347, Asp-365, Asp-388, and Val-389.

This sequence belongs to the AgrE/ArgZ ornithine cyclodeaminase family. Requires NAD(+) as cofactor.

The catalysed reaction is L-ornithine = L-proline + NH4(+). Functionally, catalyzes the conversion of ornithine to proline, with the release of ammonia. This is Ornithine cyclodeaminase from Archaeoglobus fulgidus (strain ATCC 49558 / DSM 4304 / JCM 9628 / NBRC 100126 / VC-16).